A 504-amino-acid chain; its full sequence is Maturase K (504 aa).

It belongs to the intron maturase 2 family. MatK subfamily.

It localises to the plastid. The protein localises to the chloroplast. Functionally, usually encoded in the trnK tRNA gene intron. Probably assists in splicing its own and other chloroplast group II introns. The sequence is that of Maturase K from Carpinus betulus (European hornbeam).